Reading from the N-terminus, the 465-residue chain is Lysosomal dipeptide transporter MFSD1 (465 aa).

The tract at residues 1-23 (MEEEDEEARALLAGGPDEADRGA) is disordered. The Dileucine internalization motif signature appears at 11 to 12 (LL). 12 consecutive transmembrane segments (helical) span residues 39 to 59 (LAHRLLVLLLMCFLGFGSYFC), 83 to 103 (LLYAWYSWPNVVLCFFGGFLI), 113 to 133 (TIIFSCFVCIGQVVFALGGIF), 135 to 155 (AFWLMEFGRFVFGIGGESLAV), 170 to 191 (LNLVFGLQLSMARIGSTVNMNL), 213 to 233 (ITLMIGGITCILSLICALALA), 266 to 286 (LWLIFIICVCYYVAVFPFIGL), 303 to 323 (SAINSVVYVISAPMSPVFGLL), 331 to 351 (IIWVLCAVAATLVSHMMLAFT), 361 to 381 (LLGLSYSLLACALWPMVAFVV), 392 to 412 (FMQSIQNLGLAIISIIAGMIL), and 418 to 438 (LFLEVFFIACVSLSLLSVVLL).

It belongs to the major facilitator superfamily. In terms of assembly, homodimer. Interacts with lysosomal protein GLMP (via lumenal domain); the interaction starts while both proteins are still in the endoplasmic reticulum and is required for stabilization of MFSD1 in lysosomes but has no direct effect on its targeting to lysosomes or transporter activity.

It is found in the lysosome membrane. It carries out the reaction L-alpha-aminoacyl-L-arginine(out) = L-alpha-aminoacyl-L-arginine(in). The catalysed reaction is L-arginyl-L-alpha-amino acid(out) = L-arginyl-L-alpha-amino acid(in). It catalyses the reaction L-arginyl-glycine(out) = L-arginyl-glycine(in). The enzyme catalyses L-alpha-aminoacyl-L-lysine(out) = L-alpha-aminoacyl-L-lysine(in). It carries out the reaction L-aspartyl-L-lysine(out) = L-aspartyl-L-lysine(in). The catalysed reaction is L-alanyl-L-lysine(out) = L-alanyl-L-lysine(in). It catalyses the reaction L-lysyl-L-alpha-amino acid(out) = L-lysyl-L-alpha-amino acid(in). The enzyme catalyses L-lysyl-L-alanine(out) = L-lysyl-L-alanine(in). It carries out the reaction L-lysyl-L-lysine(out) = L-lysyl-L-lysine(in). The catalysed reaction is L-lysyl-glycine(out) = L-lysyl-glycine(in). It catalyses the reaction L-alpha-aminoacyl-L-histidine(out) = L-alpha-aminoacyl-L-histidine(in). The enzyme catalyses L-histidyl-L-alpha-amino acid(out) = L-histidyl-L-alpha-amino acid(in). It carries out the reaction L-histidyl-glycine(out) = L-histidyl-glycine(in). Functionally, lysosomal dipeptide uniporter that selectively exports lysine, arginine or histidine-containing dipeptides with a net positive charge from the lysosome lumen into the cytosol. Could play a role in a specific type of protein O-glycosylation indirectly regulating macrophages migration and tissue invasion. Also essential for liver homeostasis. This Homo sapiens (Human) protein is Lysosomal dipeptide transporter MFSD1.